A 448-amino-acid polypeptide reads, in one-letter code: UDP-glycosyltransferase 79B5 (448 aa).

UDP-alpha-D-glucose contacts are provided by residues Thr-261, 320–322, 337–345, and 359–362; these read LEQ, HCGFGSMWE, and LADQ.

Belongs to the UDP-glycosyltransferase family.

In Arabidopsis thaliana (Mouse-ear cress), this protein is UDP-glycosyltransferase 79B5 (UGT79B5).